The primary structure comprises 257 residues: MSLLSKTRELNTLLQKHKGIAVDFKDVAQTISSVTVTNVFIVSRKGKILGSNLNELLKNERIIQMLENRHIPVEYTDQLMDVKETQSNIGIDNVLTVFPPENNDLFGDSRTTIFPILGGGERLGTLVLGRVTEDFSENDLVLGEYAATVIGMEILREKHNEVEQEARDKAAISMAINSLSYSESEAIEHIFEELGGKEGLLIASKVADRVGITRSVIVNALRKLESAGVIESRSLGMKGTFIKVKKDKFLDELERIK.

The segment at 1–155 (MSLLSKTREL…AATVIGMEIL (155 aa)) is GAF domain. The H-T-H motif DNA-binding region spans 203–222 (ASKVADRVGITRSVIVNALR).

This sequence belongs to the CodY family.

The protein resides in the cytoplasm. DNA-binding global transcriptional regulator which is involved in the adaptive response to starvation and acts by directly or indirectly controlling the expression of numerous genes in response to nutrient availability. During rapid exponential growth, CodY is highly active and represses genes whose products allow adaptation to nutrient depletion. This chain is Global transcriptional regulator CodY, found in Staphylococcus saprophyticus subsp. saprophyticus (strain ATCC 15305 / DSM 20229 / NCIMB 8711 / NCTC 7292 / S-41).